The sequence spans 280 residues: Phosphonoacetaldehyde hydrolase (280 aa).

Residue Asp23 is the Nucleophile of the active site. Residues Asp23 and Ala25 each coordinate Mg(2+). Lys64 (schiff-base intermediate with substrate) is an active-site residue. A Mg(2+)-binding site is contributed by Asp197.

This sequence belongs to the HAD-like hydrolase superfamily. PhnX family. In terms of assembly, homodimer. The cofactor is Mg(2+).

The catalysed reaction is phosphonoacetaldehyde + H2O = acetaldehyde + phosphate + H(+). Its function is as follows. Involved in phosphonate degradation. This is Phosphonoacetaldehyde hydrolase from Bordetella avium (strain 197N).